Reading from the N-terminus, the 283-residue chain is Acetyl-coenzyme A carboxylase carboxyl transferase subunit beta (283 aa).

The 255-residue stretch at 29 to 283 (LWISCPKCQQ…VKIHSMKGAF (255 aa)) folds into the CoA carboxyltransferase N-terminal domain. 4 residues coordinate Zn(2+): C33, C36, C51, and C54. The C4-type zinc-finger motif lies at 33–54 (CPKCQQSIYHKDLGKYKTCPNC).

Belongs to the AccD/PCCB family. In terms of assembly, acetyl-CoA carboxylase is a heterohexamer composed of biotin carboxyl carrier protein (AccB), biotin carboxylase (AccC) and two subunits each of ACCase subunit alpha (AccA) and ACCase subunit beta (AccD). Zn(2+) is required as a cofactor.

The protein localises to the cytoplasm. It catalyses the reaction N(6)-carboxybiotinyl-L-lysyl-[protein] + acetyl-CoA = N(6)-biotinyl-L-lysyl-[protein] + malonyl-CoA. The protein operates within lipid metabolism; malonyl-CoA biosynthesis; malonyl-CoA from acetyl-CoA: step 1/1. Its function is as follows. Component of the acetyl coenzyme A carboxylase (ACC) complex. Biotin carboxylase (BC) catalyzes the carboxylation of biotin on its carrier protein (BCCP) and then the CO(2) group is transferred by the transcarboxylase to acetyl-CoA to form malonyl-CoA. This chain is Acetyl-coenzyme A carboxylase carboxyl transferase subunit beta, found in Ligilactobacillus salivarius (strain UCC118) (Lactobacillus salivarius).